A 275-amino-acid chain; its full sequence is Bis(5'-nucleosyl)-tetraphosphatase, symmetrical (275 aa).

Belongs to the Ap4A hydrolase family.

The catalysed reaction is P(1),P(4)-bis(5'-adenosyl) tetraphosphate + H2O = 2 ADP + 2 H(+). Functionally, hydrolyzes diadenosine 5',5'''-P1,P4-tetraphosphate to yield ADP. The chain is Bis(5'-nucleosyl)-tetraphosphatase, symmetrical from Stutzerimonas stutzeri (strain A1501) (Pseudomonas stutzeri).